Here is a 65-residue protein sequence, read N- to C-terminus: MPKLKTNSGAKKRFALTGTGKIKRKHAFKSHILTKKTKKQKRNLTYFSTVHKVDENAVKQLLCLR.

It belongs to the bacterial ribosomal protein bL35 family.

The protein is Large ribosomal subunit protein bL35 of Porphyromonas gingivalis (strain ATCC 33277 / DSM 20709 / CIP 103683 / JCM 12257 / NCTC 11834 / 2561).